A 272-amino-acid polypeptide reads, in one-letter code: tRNA pseudouridine synthase B (272 aa).

The Nucleophile role is filled by Asp38.

This sequence belongs to the pseudouridine synthase TruB family. Type 1 subfamily.

It catalyses the reaction uridine(55) in tRNA = pseudouridine(55) in tRNA. Functionally, responsible for synthesis of pseudouridine from uracil-55 in the psi GC loop of transfer RNAs. In Campylobacter jejuni subsp. jejuni serotype O:6 (strain 81116 / NCTC 11828), this protein is tRNA pseudouridine synthase B.